A 249-amino-acid chain; its full sequence is Short-chain dehydrogenase virB (249 aa).

NADP(+) contacts are provided by Ile16, Arg104, Tyr150, Lys154, Val183, and Thr185. The Proton donor role is filled by Tyr150. Catalysis depends on Lys154, which acts as the Lowers pKa of active site Tyr.

Belongs to the short-chain dehydrogenases/reductases (SDR) family.

It functions in the pathway secondary metabolite biosynthesis. Short-chain dehydrogenase; part of the gene cluster that mediates the biosynthesis of virensols and trichoxide, fungal natural products that contain or are derived from a salicylaldehyde core. The pathway begins with the synthesis of the reduced chain in virensol C by the highly reducing polyketide synthase virA via condensation of one acetate and 8 malonate units. VirA has interesting programming rules since the first 2 ketides are fully reduced, the 3 following ketides undergo beta-dehydration, and the last 3 ketides are only reduced to beta-hydroxys to yield the trihydroxy portion. The production of aldehyde virensol C by virA alone is surprising, since virA does not contain a reductase (R) domain that is typically associated with reductive product release in HRPKS. The cupin-domain enzyme virC is involved in enhancing virA product turnover. The short-chain dehydrogenase virB then oxidizes the C-7 alcohol of virensol C to a ketone, yielding virensol D. Virensol D is further transformed to salicylaldehyde 5-deoxyaurocitrin by the short-chain dehydrogenase virD. VirD catalyzes the dehydrogenation of C-3 to form the beta-ketone aldehyde, which is followed by the generation of the nucleophilic C-2 that is required for the intramolecular aldol condensation between C-2 and C-7, itself followed by dehydration and aromatization which leads to salicylaldehyde 5-deoxyaurocitrin. While the dehydrogenation of virensol D is definitely catalyzed by virD, the aldol condensation and dehydration may be uncatalyzed or assisted by virD. The short chain dehydrogenase virG then converts salicylaldehyde 5-deoxyaurocitrin into virensol B which is further hydroxylated by the cytochrome P450 monooxygenase virE to yield the hydroquinone virensol A. VirI then may oxidize virensol A to form the quinone, while virH performs the epoxidation. Finally, the two remaining short-chain dehydrogenases, virK and virL, are probably responsible for reducing the ketones to the corresponding alcohols to furnish the epoxycyclohexanol structure in trichoxide. The chain is Short-chain dehydrogenase virB from Hypocrea virens (strain Gv29-8 / FGSC 10586) (Gliocladium virens).